Reading from the N-terminus, the 158-residue chain is C-type natriuretic peptide 3 (158 aa).

The signal sequence occupies residues 1-21 (MSLNLPGYALFFILLVASSGA). The propeptide occupies 22 to 136 (KPAPDLQILE…SKRSRSRYKK (115 aa)). The segment at 32 to 95 (PPLSSLEEQE…EVQERGRGTG (64 aa)) is disordered. A compositionally biased stretch (basic and acidic residues) spans 47–64 (VQEKVQEQQEEVQEKVQE). Acidic residues predominate over residues 65–86 (QQEEVQEQQEEVQEQQEEQQEE). A disulfide bond links Cys-142 and Cys-158.

Belongs to the natriuretic peptide family.

Its subcellular location is the secreted. Functionally, exhibits natriuretic and vasodepressant activity. Has cGMP-stimulating activity. May help to regulate body fluid homeostasis in a variety of aquatic environments. The sequence is that of C-type natriuretic peptide 3 from Takifugu rubripes (Japanese pufferfish).